The primary structure comprises 80 residues: MASTRGYVNIKTFEQKLDGNKKIEGKEISVAFPLYSDVHKISGAHYQTFPSEKAAYSTVYEENQRTEWIAANEDLWKVTG.

It belongs to the Tevenvirinae Soc family. In terms of assembly, homotrimer. Interacts with the major capsid protein; three soc molecules associate with each interface between the major capsid protein facets.

It is found in the virion. In terms of biological role, capsid decoration protein which helps to stabilize the capsid against extremes of pH and temperature. Once maturation and expansion of the capsid has occured, trimers of soc attach the interfaces between the hexamer of the major capsid protein. Acts as a 'glue' between neighboring hexameric capsomers. Dispensable for the head morphogenesis and phage infection. The chain is Small outer capsid protein (soc) from Escherichia coli (Bacteriophage T4).